The chain runs to 113 residues: Mitochondrial import inner membrane translocase subunit tim16 (113 aa).

The tract at residues 56–108 (KILGLENVETVSKEDIDKKYNELLTINDPKDGGSEYLQIKISGAKHCLHSALK) is J-like.

Belongs to the TIM16/PAM16 family. Probable component of the PAM complex at least composed of a mitochondrial HSP70 protein, grepE, tim16 and tim14. Associates with the TIM23 complex.

It localises to the mitochondrion inner membrane. Regulates ATP-dependent protein translocation into the mitochondrial matrix. The polypeptide is Mitochondrial import inner membrane translocase subunit tim16 (timm16) (Dictyostelium discoideum (Social amoeba)).